Consider the following 230-residue polypeptide: Ribonuclease 3 (230 aa).

The 134-residue stretch at 1–134 folds into the RNase III domain; the sequence is MKQLEELLST…FLGALLLDKG (134 aa). E47 contributes to the Mg(2+) binding site. Residue D51 is part of the active site. Residues D120 and E123 each contribute to the Mg(2+) site. E123 is a catalytic residue. The 70-residue stretch at 160–229 folds into the DRBM domain; sequence DYKTCLQEFL…AKNALAQLSE (70 aa).

Belongs to the ribonuclease III family. In terms of assembly, homodimer. Requires Mg(2+) as cofactor.

The protein localises to the cytoplasm. The enzyme catalyses Endonucleolytic cleavage to 5'-phosphomonoester.. In terms of biological role, digests double-stranded RNA. Involved in the processing of primary rRNA transcript to yield the immediate precursors to the large and small rRNAs (23S and 16S). Processes some mRNAs, and tRNAs when they are encoded in the rRNA operon. Processes pre-crRNA and tracrRNA of type II CRISPR loci if present in the organism. This is Ribonuclease 3 from Streptococcus pyogenes serotype M28 (strain MGAS6180).